Here is a 371-residue protein sequence, read N- to C-terminus: Regulatory protein RapK (371 aa).

TPR repeat units follow at residues 7 to 42 (EVVA…FDEM), 93 to 130 (EYNF…IPDE), 175 to 208 (ATST…AKET), 215 to 248 (AQLF…ESWL), 254 to 290 (INSL…MENK), and 331 to 364 (DELS…EQKM).

This sequence belongs to the Rap family.

It is found in the cytoplasm. With respect to regulation, inhibited by PhrK, which prevents RapK-ComA interaction. In terms of biological role, involved in the regulation of genetic competence development. Inhibits the activity of ComA, a transcriptional factor that regulates the development of genetic competence. Likely affects the activity of additional regulators, in particular Spo0A. This Bacillus subtilis (strain 168) protein is Regulatory protein RapK (rapK).